A 1377-amino-acid polypeptide reads, in one-letter code: MKEIKDFERIKIKIASPDQIRNWSYGEVKKSETINYRTLRPEKDGLFCERIFGTTKEWECYCGKFKSVRYKGIICDRCNVEVTHFKVRRERMGHIELAAPVAHIWYYKYIPSRIGLLLDITASSLNSILYYEKYVVIEPGDTDLKKMQLLNEDEYIEARERYGMSFNASMGAEAIKTLLENLDLDELSSKLRIQMIDKDDKTDKKLLRRLEIIENFKISGNKPEWMIMEVLPVIPPEIRPMVQLDGGRFATSDLNDLYRRVINRNNRLRKLLLLNAPEIIVRNEKRMLQESVDSLFDNSHKRKVVKGSSSRPLKSLSDALKGKQGRFRQNLLGKRVDYSGRSVIVVGPELKLHQCGLPAKMALELFKPFVIRRLIESEAVFNIKRAKNLIEQEVDEVWQILDLVIKEHPILLNRAPTLHRLGIQAFEPVLVEGKAIKLHPLVCHAYNADFDGDQMAVHVPLTPAAQAESWALMLSTNNLLNPANGHPIVFPSQDIVLGLYYLTMEKKNVVGEGKKFLNFNNVILAINNRSLDYNASIYVKIHGEYKKTTAGRVIFNEALPKGIEFVNKTLSDLELQILISKVYVVHGSSIVIEMLDIIKELGFRYATKFGCTISMSDIIVPDEKRTYVERANKEIAKIQNDYAKGVITGEERYNNVVSVWLKTNEELTNKMMEILKKDRDGFNVIYMMADSGARGSRNQIRQLAGMRGLMAKTSGDIIELPIISNFKEGLSVIEFFISTNGARKGLADTALKTADAGYLTRRLVDIAQDVVVRIEDCGTINGIKVETVKNGEEILESLKEKAVGSYSIERIKNPITGEIVLDANEEISEAKIELLEKIGIEKLVIRSVLTCEAEHGVCQKCYGRDFSKNKPVNIGEAVGIIAAQSIGQPGTQLTMRTFHIGGVAQAGSEDDKISLKNAFILNGIEGFNVRVDNGILFTRKGTLKIINVFYEEKIKNIKEIKVLDSQRVIKGIPLFIDKKGSEILSSYIGYVKLRDDNFFIVSEEQEVSLKAGTKLEIEVGDYVESGKVIGTFDPFAEPIIAEVKGKIKFKDIILGTTLKEEINTETGNVEKRITDNVFESLDPRIFIIDSSGMEVASYVLPGDAYLQVEDGQSINIGDIIAKLSKGSEKTQDITGGLPRVNDLFETRIPKNLTEMAKVSGIVQFKSIQKGKRLINILDEYGVEHKHYIPAGKHLLVRDGDVVKAGDMLCDGRINPHDVLEILGGISLQEFLLAEIQDVYRKQGVSINDKHIGVIIKQMMKKVKIVAVGDTNFVYGQKVDKHTFYEQNRKVIEQGGEPAIASPILIGVTKTSLNIDSFISAASFQETTKVLTDASIAGKIDDLRGLKENVVIGHLIPTGTGMGLYKKIKVSENIDSEV.

Zn(2+)-binding residues include cysteine 60, cysteine 62, cysteine 75, and cysteine 78. Residues aspartate 449, aspartate 451, and aspartate 453 each coordinate Mg(2+). Zn(2+) contacts are provided by cysteine 777, cysteine 851, cysteine 858, and cysteine 861.

Belongs to the RNA polymerase beta' chain family. In terms of assembly, the RNAP catalytic core consists of 2 alpha, 1 beta, 1 beta' and 1 omega subunit. When a sigma factor is associated with the core the holoenzyme is formed, which can initiate transcription. Requires Mg(2+) as cofactor. Zn(2+) serves as cofactor.

The enzyme catalyses RNA(n) + a ribonucleoside 5'-triphosphate = RNA(n+1) + diphosphate. DNA-dependent RNA polymerase catalyzes the transcription of DNA into RNA using the four ribonucleoside triphosphates as substrates. This Borreliella burgdorferi (strain ATCC 35210 / DSM 4680 / CIP 102532 / B31) (Borrelia burgdorferi) protein is DNA-directed RNA polymerase subunit beta'.